We begin with the raw amino-acid sequence, 148 residues long: Large ribosomal subunit protein bL9 (148 aa).

It belongs to the bacterial ribosomal protein bL9 family.

Functionally, binds to the 23S rRNA. The polypeptide is Large ribosomal subunit protein bL9 (Staphylococcus aureus (strain bovine RF122 / ET3-1)).